The primary structure comprises 181 residues: dTTP/UTP pyrophosphatase (181 aa).

Residue aspartate 67 is the Proton acceptor of the active site.

Belongs to the Maf family. YhdE subfamily. A divalent metal cation serves as cofactor.

It is found in the cytoplasm. It carries out the reaction dTTP + H2O = dTMP + diphosphate + H(+). The catalysed reaction is UTP + H2O = UMP + diphosphate + H(+). Functionally, nucleoside triphosphate pyrophosphatase that hydrolyzes dTTP and UTP. May have a dual role in cell division arrest and in preventing the incorporation of modified nucleotides into cellular nucleic acids. The protein is dTTP/UTP pyrophosphatase of Latilactobacillus sakei subsp. sakei (strain 23K) (Lactobacillus sakei subsp. sakei).